We begin with the raw amino-acid sequence, 520 residues long: AarF domain-containing protein kinase 1 (520 aa).

The region spanning 148–455 (EFEKTPLGAA…GTHSSSSAFF (308 aa)) is the Protein kinase domain. Residues 154 to 162 (LGAASLAQV) and Lys-176 each bind ATP. The active-site Proton acceptor is Asp-308.

This sequence belongs to the protein kinase superfamily. ADCK protein kinase family.

It is found in the mitochondrion. Its function is as follows. Appears to be essential for maintaining mitochondrial cristae formation and mitochondrial function by acting via YME1L1 in a kinase-independent manner to regulate essential mitochondrial structural proteins OPA1 and IMMT. The action of this enzyme is not yet clear. It is not known if it has protein kinase activity and what type of substrate it would phosphorylate (Ser, Thr or Tyr). The protein is AarF domain-containing protein kinase 1 (adck1) of Xenopus laevis (African clawed frog).